The chain runs to 532 residues: Phosphoenolpyruvate carboxykinase (ATP) (532 aa).

3 residues coordinate substrate: R60, Y200, and K206. ATP is bound by residues K206, H225, and 242 to 250; that span reads GLSGTGKTT. Positions 206 and 225 each coordinate Mn(2+). Residue S244 coordinates substrate. Residue D263 participates in Mn(2+) binding. ATP contacts are provided by residues E291, R327, 443-444, and T449; that span reads RI. R327 serves as a coordination point for substrate.

It belongs to the phosphoenolpyruvate carboxykinase (ATP) family. Monomer. Mn(2+) serves as cofactor.

It localises to the cytoplasm. It catalyses the reaction oxaloacetate + ATP = phosphoenolpyruvate + ADP + CO2. The protein operates within carbohydrate biosynthesis; gluconeogenesis. Its activity is regulated as follows. Inhibited by p-chloromercuribenzoate. Functionally, involved in gluconeogenesis. Catalyzes the conversion of oxaloacetate (OAA) to phosphoenolpyruvate (PEP) through direct phosphoryl transfer between the nucleoside triphosphate and OAA. This is Phosphoenolpyruvate carboxykinase (ATP) from Anaerobiospirillum succiniciproducens.